The following is a 182-amino-acid chain: Large ribosomal subunit protein uL6 (182 aa).

The protein belongs to the universal ribosomal protein uL6 family. In terms of assembly, part of the 50S ribosomal subunit.

This protein binds to the 23S rRNA, and is important in its secondary structure. It is located near the subunit interface in the base of the L7/L12 stalk, and near the tRNA binding site of the peptidyltransferase center. The chain is Large ribosomal subunit protein uL6 from Nostoc punctiforme (strain ATCC 29133 / PCC 73102).